The following is a 115-amino-acid chain: MAGMVLGVGAGVFLLALIWVLVLLLCVLLSRASGIARFSIVFVFLGALIITTVLLLFPRASEFPAPEGEMKIVDAFFIGRYVLLAFLSAVFLGGLFLLLTHHLLEPIYAKPLRSC.

The next 3 helical transmembrane spans lie at 5 to 25 (VLGV…VLLL), 38 to 58 (FSIV…LLFP), and 81 to 101 (YVLL…LLTH).

It belongs to the TMEM218 family. As to quaternary structure, interacts with TMEM67.

It localises to the membrane. It is found in the cell projection. Its subcellular location is the cilium. Its function is as follows. May be involved in ciliary biogenesis or function. The protein is Transmembrane protein 218 (Tmem218) of Mus musculus (Mouse).